Reading from the N-terminus, the 116-residue chain is Large ribosomal subunit protein bL20 (116 aa).

The protein belongs to the bacterial ribosomal protein bL20 family.

Binds directly to 23S ribosomal RNA and is necessary for the in vitro assembly process of the 50S ribosomal subunit. It is not involved in the protein synthesizing functions of that subunit. The polypeptide is Large ribosomal subunit protein bL20 (Bacteroides fragilis (strain ATCC 25285 / DSM 2151 / CCUG 4856 / JCM 11019 / LMG 10263 / NCTC 9343 / Onslow / VPI 2553 / EN-2)).